Reading from the N-terminus, the 230-residue chain is Exosome complex component Rrp4 (230 aa).

The 70-residue stretch at 60–129 (NDKVIGKVID…EIKESWLSLK (70 aa)) folds into the S1 motif domain. Residues 137–195 (EEGSIIYIKAPKVPRVIGKAGNMINMIKSETNTKIIVGQNGLIWIDGEPENVDLAINAI) enclose the KH domain.

It belongs to the RRP4 family. In terms of assembly, component of the archaeal exosome complex. Forms a trimer of Rrp4 and/or Csl4 subunits. The trimer associates with a hexameric ring-like arrangement composed of 3 Rrp41-Rrp42 heterodimers.

The protein localises to the cytoplasm. In terms of biological role, non-catalytic component of the exosome, which is a complex involved in RNA degradation. Increases the RNA binding and the efficiency of RNA degradation. Confers strong poly(A) specificity to the exosome. This Picrophilus torridus (strain ATCC 700027 / DSM 9790 / JCM 10055 / NBRC 100828 / KAW 2/3) protein is Exosome complex component Rrp4.